Reading from the N-terminus, the 98-residue chain is Acylphosphatase (98 aa).

The Acylphosphatase-like domain occupies 12–98 (TYYVRVRGVV…EKRFERFQQQ (87 aa)). Active-site residues include R27 and N45.

It belongs to the acylphosphatase family.

The catalysed reaction is an acyl phosphate + H2O = a carboxylate + phosphate + H(+). This is Acylphosphatase (acyP) from Burkholderia cenocepacia (strain HI2424).